The following is a 530-amino-acid chain: Hyccin 2 (530 aa).

Residues Thr-30 and Thr-306 each carry the phosphothreonine modification. Phosphoserine is present on residues Ser-321 and Ser-341. The interval 328-410 (RREGAEGVNG…DSVVRKQYVQ (83 aa)) is disordered. Polar residues predominate over residues 353-373 (SGASLSSQPIGTKPSSSSQRG). 4 positions are modified to phosphoserine: Ser-430, Ser-442, Ser-444, and Ser-491. A disordered region spans residues 502 to 530 (EGKELLSPGAPLTKQSRSPSFNMQLISQV). A compositionally biased stretch (polar residues) spans 514 to 530 (TKQSRSPSFNMQLISQV).

Belongs to the Hyccin family. Component of a phosphatidylinositol 4-kinase (PI4K) complex, composed of PI4KA, EFR3 (EFR3A or EFR3B), TTC7 (TTC7A or TTC7B) and HYCC (HYCC1 or HYCC2).

The protein resides in the cytoplasm. It localises to the cytosol. It is found in the cell membrane. In terms of biological role, component of a complex required to localize phosphatidylinositol 4-kinase (PI4K) to the plasma membrane. This chain is Hyccin 2, found in Homo sapiens (Human).